We begin with the raw amino-acid sequence, 325 residues long: Sensor histidine kinase YxdK (325 aa).

Residues 1 to 8 (MKLFLRSH) lie on the Cytoplasmic side of the membrane. Residues 9 to 29 (AVLILLFLLQGLFVFFYYWFA) traverse the membrane as a helical segment. Residues 30-33 (GLHS) are Extracellular-facing. A helical transmembrane segment spans residues 34-54 (FSHLFYILGVQLLILAGYLAY). Residues 55-325 (RWYKDRGVYH…SVRFSFLTKM (271 aa)) lie on the Cytoplasmic side of the membrane. The Histidine kinase domain maps to 118–325 (QWVHQVKTPL…SVRFSFLTKM (208 aa)). The residue at position 121 (histidine 121) is a Phosphohistidine; by autocatalysis.

Its subcellular location is the cell membrane. It carries out the reaction ATP + protein L-histidine = ADP + protein N-phospho-L-histidine.. Its function is as follows. Probable member of the two-component regulatory system YxdK/YxdJ. May activate YxdJ in response to the antibacterial protein LL-37. The chain is Sensor histidine kinase YxdK (yxdK) from Bacillus subtilis (strain 168).